Reading from the N-terminus, the 62-residue chain is Statherin (62 aa).

The N-terminal stretch at 1-19 is a signal peptide; sequence MKFLVFAFILALMVSMIGA. Positions 20–25 are hydroxyapatite-binding; inhibits crystal growth; the sequence is DSSEEK. Residues serine 21 and serine 22 each carry the phosphoserine modification. Positions 25 to 56 form a cross-link, isoglutamyl lysine isopeptide (Lys-Gln); in form cyclo-statherin Q-37; that stretch reads KFLRRIGRFGYGYGPYQPVPEQPLYPQPYQPQ. Positions 25-58 form a cross-link, isoglutamyl lysine isopeptide (Lys-Gln); in form cyclo-statherin Q-39; the sequence is KFLRRIGRFGYGYGPYQPVPEQPLYPQPYQPQYQ. Residues 38-62 form a hydrophobic; inhibits precipitation of calcium phosphate salts region; that stretch reads GPYQPVPEQPLYPQPYQPQYQQYTF.

The protein belongs to the histatin/statherin family. In terms of processing, substrate for transglutaminase-2. More than 95% of the cyclized peptide is cyclo-statherin Q-37, and less than 5% is cyclo-statherin Q-39. Cyclized forms account for about 1% of total statherin in saliva. Sulfated on tyrosine residues. As to expression, secreted by parotid and submandibular glands.

Its subcellular location is the secreted. Salivary protein that stabilizes saliva supersaturated with calcium salts by inhibiting the precipitation of calcium phosphate salts. It also modulates hydroxyapatite crystal formation on the tooth surface. The polypeptide is Statherin (STATH) (Homo sapiens (Human)).